Reading from the N-terminus, the 66-residue chain is Large ribosomal subunit protein bL32 (66 aa).

It belongs to the bacterial ribosomal protein bL32 family.

This chain is Large ribosomal subunit protein bL32, found in Rickettsia akari (strain Hartford).